Here is a 436-residue protein sequence, read N- to C-terminus: Citrate synthase (436 aa).

Active-site residues include H311 and D370.

Belongs to the citrate synthase family.

It carries out the reaction oxaloacetate + acetyl-CoA + H2O = citrate + CoA + H(+). It functions in the pathway carbohydrate metabolism; tricarboxylic acid cycle; isocitrate from oxaloacetate: step 1/2. The protein is Citrate synthase (gltA) of Rickettsia typhi (strain ATCC VR-144 / Wilmington).